The sequence spans 202 residues: Small ribosomal subunit protein uS4 (202 aa).

Residues 22–43 (TRKSARRAYPPGQHGQNRKKRS) are disordered. In terms of domain architecture, S4 RNA-binding spans 90-152 (MRLDNTVFRL…APSRKLVENN (63 aa)).

This sequence belongs to the universal ribosomal protein uS4 family. Part of the 30S ribosomal subunit. Contacts protein S5. The interaction surface between S4 and S5 is involved in control of translational fidelity.

Functionally, one of the primary rRNA binding proteins, it binds directly to 16S rRNA where it nucleates assembly of the body of the 30S subunit. With S5 and S12 plays an important role in translational accuracy. This is Small ribosomal subunit protein uS4 from Trichormus variabilis (strain ATCC 29413 / PCC 7937) (Anabaena variabilis).